The sequence spans 423 residues: Serine--tRNA ligase (423 aa).

Residue 231-233 participates in L-serine binding; sequence TGE. Position 262-264 (262-264) interacts with ATP; sequence RSE. Glutamate 285 provides a ligand contact to L-serine. 349-352 provides a ligand contact to ATP; it reads EISS. Serine 385 serves as a coordination point for L-serine.

The protein belongs to the class-II aminoacyl-tRNA synthetase family. Type-1 seryl-tRNA synthetase subfamily. As to quaternary structure, homodimer. The tRNA molecule binds across the dimer.

The protein localises to the cytoplasm. The enzyme catalyses tRNA(Ser) + L-serine + ATP = L-seryl-tRNA(Ser) + AMP + diphosphate + H(+). It carries out the reaction tRNA(Sec) + L-serine + ATP = L-seryl-tRNA(Sec) + AMP + diphosphate + H(+). Its pathway is aminoacyl-tRNA biosynthesis; selenocysteinyl-tRNA(Sec) biosynthesis; L-seryl-tRNA(Sec) from L-serine and tRNA(Sec): step 1/1. Catalyzes the attachment of serine to tRNA(Ser). Is also able to aminoacylate tRNA(Sec) with serine, to form the misacylated tRNA L-seryl-tRNA(Sec), which will be further converted into selenocysteinyl-tRNA(Sec). The chain is Serine--tRNA ligase from Coxiella burnetii (strain RSA 331 / Henzerling II).